The chain runs to 61 residues: Large ribosomal subunit protein uL30 (61 aa).

This sequence belongs to the universal ribosomal protein uL30 family. Part of the 50S ribosomal subunit.

The protein is Large ribosomal subunit protein uL30 of Chlorobium phaeobacteroides (strain DSM 266 / SMG 266 / 2430).